The primary structure comprises 337 residues: Ribosomal RNA small subunit methyltransferase C (337 aa).

The protein belongs to the methyltransferase superfamily. RsmC family. In terms of assembly, monomer.

It localises to the cytoplasm. It catalyses the reaction guanosine(1207) in 16S rRNA + S-adenosyl-L-methionine = N(2)-methylguanosine(1207) in 16S rRNA + S-adenosyl-L-homocysteine + H(+). In terms of biological role, specifically methylates the guanine in position 1207 of 16S rRNA in the 30S particle. The chain is Ribosomal RNA small subunit methyltransferase C from Proteus mirabilis (strain HI4320).